Consider the following 881-residue polypeptide: Translation initiation factor IF-2 (881 aa).

Disordered stretches follow at residues 53–92 (RSHG…SKTT) and 163–292 (AEAE…FERP). Over residues 81–92 (EVTVNSGRSKTT) the composition is skewed to polar residues. Low complexity predominate over residues 172–186 (EAAAAAKAAEALAAA). The span at 219–236 (RNDDRNNRSAPRNERGPG) shows a compositional bias: basic and acidic residues. Residues 254-263 (GNSNNSNTRG) are compositionally biased toward low complexity. Positions 380–549 (QRPPVVTIMG…SIQAELLELK (170 aa)) constitute a tr-type G domain. Residues 389–396 (GHVDHGKT) are G1. Position 389–396 (389–396 (GHVDHGKT)) interacts with GTP. The G2 stretch occupies residues 414–418 (GITQH). The segment at 435-438 (DTPG) is G3. Residues 435-439 (DTPGH) and 489-492 (NKID) contribute to the GTP site. Residues 489-492 (NKID) are G4. The segment at 525–527 (SAK) is G5.

This sequence belongs to the TRAFAC class translation factor GTPase superfamily. Classic translation factor GTPase family. IF-2 subfamily.

The protein resides in the cytoplasm. Functionally, one of the essential components for the initiation of protein synthesis. Protects formylmethionyl-tRNA from spontaneous hydrolysis and promotes its binding to the 30S ribosomal subunits. Also involved in the hydrolysis of GTP during the formation of the 70S ribosomal complex. This Stenotrophomonas maltophilia (strain K279a) protein is Translation initiation factor IF-2.